Reading from the N-terminus, the 309-residue chain is DNA replication terminus site-binding protein (309 aa).

Belongs to the Tus family.

It localises to the cytoplasm. Functionally, trans-acting protein required for termination of DNA replication. Binds to DNA replication terminator sequences (terA to terF) to prevent the passage of replication forks. The termination efficiency will be affected by the affinity of this protein for the terminator sequence. This is DNA replication terminus site-binding protein from Yersinia enterocolitica serotype O:8 / biotype 1B (strain NCTC 13174 / 8081).